The following is a 380-amino-acid chain: Dual-specificity RNA methyltransferase RlmN (380 aa).

The active-site Proton acceptor is the Glu-94. A Radical SAM core domain is found at 100 to 339 (DGDRATLCVS…VTVRKTRGDD (240 aa)). A disulfide bridge links Cys-107 with Cys-344. The [4Fe-4S] cluster site is built by Cys-114, Cys-118, and Cys-121. Residues 168–169 (GE), Ser-200, 222–224 (SLH), and Asn-301 each bind S-adenosyl-L-methionine. Cys-344 functions as the S-methylcysteine intermediate in the catalytic mechanism.

The protein belongs to the radical SAM superfamily. RlmN family. It depends on [4Fe-4S] cluster as a cofactor.

The protein resides in the cytoplasm. The enzyme catalyses adenosine(2503) in 23S rRNA + 2 reduced [2Fe-2S]-[ferredoxin] + 2 S-adenosyl-L-methionine = 2-methyladenosine(2503) in 23S rRNA + 5'-deoxyadenosine + L-methionine + 2 oxidized [2Fe-2S]-[ferredoxin] + S-adenosyl-L-homocysteine. It catalyses the reaction adenosine(37) in tRNA + 2 reduced [2Fe-2S]-[ferredoxin] + 2 S-adenosyl-L-methionine = 2-methyladenosine(37) in tRNA + 5'-deoxyadenosine + L-methionine + 2 oxidized [2Fe-2S]-[ferredoxin] + S-adenosyl-L-homocysteine. Specifically methylates position 2 of adenine 2503 in 23S rRNA and position 2 of adenine 37 in tRNAs. m2A2503 modification seems to play a crucial role in the proofreading step occurring at the peptidyl transferase center and thus would serve to optimize ribosomal fidelity. The sequence is that of Dual-specificity RNA methyltransferase RlmN from Vibrio atlanticus (strain LGP32) (Vibrio splendidus (strain Mel32)).